A 402-amino-acid polypeptide reads, in one-letter code: MSRVSQARNLGKYFLLIDNMLVVLVFFVVFPLISIRFVDQMGWAAVMVGIALGLRQFIQQGLGIFGGAIADRFGAKPMIVTGMLMRAAGFATMGIAHEPWLLWFSCFLSGLGGTLFDPPRSALVVKLIRPEQRGRFFSLLMMQDSAGAVIGALLGSWLLQYDFRLVCATGAILFILCALFNAWLLPAWKLSTVRTPVREGMRRVMSDKRFVTYVLTLAGYYMLAVQVMLMLPIMVNDIAGSPAAVKWMYAIEACLSLTLLYPIARWSEKRFRLEHRLMAGLLVMSLSMIPIGMVGNLQQLFTLICAFYIGSVIAEPARETLSASLADARARGSYMGFSRLGLAIGGAIGYIGGGWLFDMGKALTQPELPWMMLGIIGFITFLALGWQFSHKRTPRRMLEPGA.

Over 1 to 12 (MSRVSQARNLGK) the chain is Cytoplasmic. Residues 13 to 33 (YFLLIDNMLVVLVFFVVFPLI) traverse the membrane as a helical segment. Residues 34-98 (SIRFVDQMGW…GFATMGIAHE (65 aa)) lie on the Periplasmic side of the membrane. A helical membrane pass occupies residues 99–116 (PWLLWFSCFLSGLGGTLF). At 117 to 138 (DPPRSALVVKLIRPEQRGRFFS) the chain is on the cytoplasmic side. A helical membrane pass occupies residues 139 to 159 (LLMMQDSAGAVIGALLGSWLL). Over 160–164 (QYDFR) the chain is Periplasmic. The helical transmembrane segment at 165–185 (LVCATGAILFILCALFNAWLL) threads the bilayer. Residues 186-213 (PAWKLSTVRTPVREGMRRVMSDKRFVTY) are Cytoplasmic-facing. Residues 214–234 (VLTLAGYYMLAVQVMLMLPIM) traverse the membrane as a helical segment. Residues 235–243 (VNDIAGSPA) lie on the Periplasmic side of the membrane. The chain crosses the membrane as a helical span at residues 244 to 264 (AVKWMYAIEACLSLTLLYPIA). The Cytoplasmic segment spans residues 265–276 (RWSEKRFRLEHR). Residues 277–297 (LMAGLLVMSLSMIPIGMVGNL) form a helical membrane-spanning segment. Topologically, residues 298 to 299 (QQ) are periplasmic. The chain crosses the membrane as a helical span at residues 300–320 (LFTLICAFYIGSVIAEPARET). Residues 321-339 (LSASLADARARGSYMGFSR) are Cytoplasmic-facing. The chain crosses the membrane as a helical span at residues 340–360 (LGLAIGGAIGYIGGGWLFDMG). The Periplasmic segment spans residues 361–367 (KALTQPE). The helical transmembrane segment at 368-388 (LPWMMLGIIGFITFLALGWQF) threads the bilayer. The Cytoplasmic portion of the chain corresponds to 389 to 402 (SHKRTPRRMLEPGA).

The protein belongs to the major facilitator superfamily. DHA1 family. MdtH (TC 2.A.1.2.21) subfamily.

The protein resides in the cell inner membrane. This chain is Multidrug resistance protein MdtH, found in Salmonella choleraesuis (strain SC-B67).